Consider the following 246-residue polypeptide: Phycocyanobilin:ferredoxin oxidoreductase (246 aa).

The protein belongs to the HY2 family.

It catalyses the reaction (2R,3Z)-phycocyanobilin + 4 oxidized [2Fe-2S]-[ferredoxin] = biliverdin IXalpha + 4 reduced [2Fe-2S]-[ferredoxin] + 4 H(+). Its function is as follows. Catalyzes the four-electron reduction of biliverdin IX-alpha (2-electron reduction at both the A and D rings); the reaction proceeds via an isolatable 2-electron intermediate, 181,182-dihydrobiliverdin. This is Phycocyanobilin:ferredoxin oxidoreductase from Synechococcus sp. (strain CC9902).